The primary structure comprises 361 residues: Putative agmatine deiminase (361 aa).

C354 functions as the Amidino-cysteine intermediate in the catalytic mechanism.

It belongs to the agmatine deiminase family.

The catalysed reaction is agmatine + H2O = N-carbamoylputrescine + NH4(+). This chain is Putative agmatine deiminase, found in Streptococcus pneumoniae (strain ATCC 700669 / Spain 23F-1).